We begin with the raw amino-acid sequence, 377 residues long: ATP phosphoribosyltransferase regulatory subunit (377 aa).

The protein belongs to the class-II aminoacyl-tRNA synthetase family. HisZ subfamily. Heteromultimer composed of HisG and HisZ subunits.

The protein resides in the cytoplasm. Its pathway is amino-acid biosynthesis; L-histidine biosynthesis; L-histidine from 5-phospho-alpha-D-ribose 1-diphosphate: step 1/9. Required for the first step of histidine biosynthesis. May allow the feedback regulation of ATP phosphoribosyltransferase activity by histidine. The chain is ATP phosphoribosyltransferase regulatory subunit from Sinorhizobium medicae (strain WSM419) (Ensifer medicae).